Reading from the N-terminus, the 225-residue chain is ATP synthase subunit a (225 aa).

A run of 6 helical transmembrane segments spans residues leucine 18–leucine 38, isoleucine 73–isoleucine 93, methionine 100–isoleucine 120, methionine 126–isoleucine 146, glycine 156–leucine 176, and isoleucine 187–methionine 207.

Belongs to the ATPase A chain family. As to quaternary structure, F-type ATPases have 2 components, CF(1) - the catalytic core - and CF(0) - the membrane proton channel. CF(1) has five subunits: alpha(3), beta(3), gamma(1), delta(1), epsilon(1). CF(0) has three main subunits: a, b and c.

The protein resides in the mitochondrion inner membrane. Mitochondrial membrane ATP synthase (F(1)F(0) ATP synthase or Complex V) produces ATP from ADP in the presence of a proton gradient across the membrane which is generated by electron transport complexes of the respiratory chain. F-type ATPases consist of two structural domains, F(1) - containing the extramembraneous catalytic core and F(0) - containing the membrane proton channel, linked together by a central stalk and a peripheral stalk. During catalysis, ATP synthesis in the catalytic domain of F(1) is coupled via a rotary mechanism of the central stalk subunits to proton translocation. Key component of the proton channel; it may play a direct role in the translocation of protons across the membrane. This Locusta migratoria (Migratory locust) protein is ATP synthase subunit a (ATP6).